A 572-amino-acid chain; its full sequence is Moesin/ezrin/radixin homolog 1 (572 aa).

The 291-residue stretch at 1 to 291 (MNVRVTTMDA…GNHELYMRRR (291 aa)) folds into the FERM domain. The tract at residues 456-491 (TTTPSHHHVEEEEEMDNEEELVNGENGNQDFSKDFD) is disordered. Residues 466–477 (EEEEMDNEEELV) are compositionally biased toward acidic residues. Thr553 bears the Phosphothreonine mark.

As to quaternary structure, interacts with cytoskeletal actin.

Its subcellular location is the cell junction. It is found in the adherens junction. It localises to the cell projection. The protein localises to the microvillus. The protein resides in the rhabdomere. Its subcellular location is the cell membrane. It is found in the cytoplasm. It localises to the cytoskeleton. Involved in connections of major cytoskeletal structures to the plasma membrane. The sequence is that of Moesin/ezrin/radixin homolog 1 from Culex quinquefasciatus (Southern house mosquito).